A 289-amino-acid chain; its full sequence is uncharacterized protein (289 aa).

One can recognise an HTH tetR-type domain in the interval 2-62; it reads NEKKERIIKT…SACEYYIGMS (61 aa). A DNA-binding region (H-T-H motif) is located at residues 25 to 44; sequence TIQEIASECGISKGAFYLHF.

This is an uncharacterized protein from Bacillus subtilis (strain 168).